The following is a 723-amino-acid chain: Lim and transglutaminase domain protein ltd-1 (723 aa).

Positions 5 to 72 (QHCNRCGKQV…SNHVPIAGPH (68 aa)) constitute an LIM zinc-binding domain.

Belongs to the transglutaminase-like superfamily. In terms of tissue distribution, expressed in the Y and U rectal epithelial cells, in marginal cells of the terminal bulb and isthmus of the pharynx (at protein level).

The protein resides in the cytoplasm. The protein localises to the cytoskeleton. In terms of biological role, cytoskeleton-associated protein. May play a role in hypodermal cell development. This Caenorhabditis elegans protein is Lim and transglutaminase domain protein ltd-1.